The sequence spans 272 residues: MSTMAVVERRKEDIPSAQLVKKEVVYETNGLNVWYGEHHALKHIHLSFYEREITAIIGPSGCGKSTYIKTLNRMIELIPNVRLEGEILYRGRRIFDTSYPVEQLRTQVGMVFQKPNPFPKSIYDNVAYGPRIHGIRDRRRLDEIVEKSLRQAALWEEVKDRLHENALGLSGGQQQRLCIARCLAVEPDVILMDEPTSALDPISTAKVEELMGELKTKYSIIIVTHNMQQAARISDRTAFFLNGEVIEYGETKTLFSRPADQRTADYIAGRFG.

One can recognise an ABC transporter domain in the interval 20–267 (VKKEVVYETN…PADQRTADYI (248 aa)). 58 to 65 (GPSGCGKS) lines the ATP pocket.

The protein belongs to the ABC transporter superfamily. Phosphate importer (TC 3.A.1.7) family. The complex is composed of two ATP-binding proteins (PstB), two transmembrane proteins (PstC and PstA) and a solute-binding protein (PstS).

The protein localises to the cell membrane. The catalysed reaction is phosphate(out) + ATP + H2O = ADP + 2 phosphate(in) + H(+). Part of the ABC transporter complex PstSACB involved in phosphate import. Responsible for energy coupling to the transport system. In Geobacillus kaustophilus (strain HTA426), this protein is Phosphate import ATP-binding protein PstB.